A 198-amino-acid chain; its full sequence is Na(+)-translocating NADH-quinone reductase subunit E (198 aa).

6 helical membrane-spanning segments follow: residues 11 to 31, 39 to 59, 77 to 97, 110 to 130, 140 to 160, and 176 to 196; these read SIFI…FLAV, MGLG…NNLI, FLSF…LEMA, GIFL…SFMV, VVYG…MAGI, and LGIT…FSGI.

This sequence belongs to the NqrDE/RnfAE family. As to quaternary structure, composed of six subunits; NqrA, NqrB, NqrC, NqrD, NqrE and NqrF.

The protein resides in the cell inner membrane. It carries out the reaction a ubiquinone + n Na(+)(in) + NADH + H(+) = a ubiquinol + n Na(+)(out) + NAD(+). Its function is as follows. NQR complex catalyzes the reduction of ubiquinone-1 to ubiquinol by two successive reactions, coupled with the transport of Na(+) ions from the cytoplasm to the periplasm. NqrA to NqrE are probably involved in the second step, the conversion of ubisemiquinone to ubiquinol. In Aeromonas hydrophila subsp. hydrophila (strain ATCC 7966 / DSM 30187 / BCRC 13018 / CCUG 14551 / JCM 1027 / KCTC 2358 / NCIMB 9240 / NCTC 8049), this protein is Na(+)-translocating NADH-quinone reductase subunit E.